Here is a 200-residue protein sequence, read N- to C-terminus: Dephospho-CoA kinase (200 aa).

The DPCK domain maps to 4-200; it reads VIGLTGGIAS…AILKKWNIID (197 aa). 12-17 contributes to the ATP binding site; it reads ASGKST.

The protein belongs to the CoaE family.

The protein localises to the cytoplasm. The enzyme catalyses 3'-dephospho-CoA + ATP = ADP + CoA + H(+). It functions in the pathway cofactor biosynthesis; coenzyme A biosynthesis; CoA from (R)-pantothenate: step 5/5. Its function is as follows. Catalyzes the phosphorylation of the 3'-hydroxyl group of dephosphocoenzyme A to form coenzyme A. In Bacillus anthracis, this protein is Dephospho-CoA kinase.